A 168-amino-acid polypeptide reads, in one-letter code: Xanthine-guanine phosphoribosyltransferase (168 aa).

5-phospho-alpha-D-ribose 1-diphosphate-binding positions include 43 to 44 (RG) and 102 to 110 (DDLVDTGAT). A Mg(2+)-binding site is contributed by Asp103. Residues Asp106 and Ile149 each contribute to the guanine site. 2 residues coordinate xanthine: Asp106 and Ile149. Residues 106–110 (DTGAT) and 148–149 (WI) contribute to the GMP site.

It belongs to the purine/pyrimidine phosphoribosyltransferase family. XGPT subfamily. As to quaternary structure, homotetramer. Mg(2+) is required as a cofactor.

It localises to the cell inner membrane. The enzyme catalyses GMP + diphosphate = guanine + 5-phospho-alpha-D-ribose 1-diphosphate. The catalysed reaction is XMP + diphosphate = xanthine + 5-phospho-alpha-D-ribose 1-diphosphate. It catalyses the reaction IMP + diphosphate = hypoxanthine + 5-phospho-alpha-D-ribose 1-diphosphate. Its pathway is purine metabolism; GMP biosynthesis via salvage pathway; GMP from guanine: step 1/1. It participates in purine metabolism; XMP biosynthesis via salvage pathway; XMP from xanthine: step 1/1. Purine salvage pathway enzyme that catalyzes the transfer of the ribosyl-5-phosphate group from 5-phospho-alpha-D-ribose 1-diphosphate (PRPP) to the N9 position of the 6-oxopurines guanine and xanthine to form the corresponding ribonucleotides GMP (guanosine 5'-monophosphate) and XMP (xanthosine 5'-monophosphate), with the release of PPi. To a lesser extent, also acts on hypoxanthine. This is Xanthine-guanine phosphoribosyltransferase from Nitrobacter hamburgensis (strain DSM 10229 / NCIMB 13809 / X14).